Here is a 599-residue protein sequence, read N- to C-terminus: Elongation factor 4 (599 aa).

One can recognise a tr-type G domain in the interval 5–187 (SKIRNFSIVA…AIVKRLPAPT (183 aa)). GTP-binding positions include 17–22 (DHGKST) and 134–137 (NKID).

The protein belongs to the TRAFAC class translation factor GTPase superfamily. Classic translation factor GTPase family. LepA subfamily.

The protein localises to the cell inner membrane. The enzyme catalyses GTP + H2O = GDP + phosphate + H(+). Required for accurate and efficient protein synthesis under certain stress conditions. May act as a fidelity factor of the translation reaction, by catalyzing a one-codon backward translocation of tRNAs on improperly translocated ribosomes. Back-translocation proceeds from a post-translocation (POST) complex to a pre-translocation (PRE) complex, thus giving elongation factor G a second chance to translocate the tRNAs correctly. Binds to ribosomes in a GTP-dependent manner. This is Elongation factor 4 from Ruegeria sp. (strain TM1040) (Silicibacter sp.).